The primary structure comprises 211 residues: Small ribosomal subunit protein uS3 (211 aa).

A KH type-2 domain is found at 38–106; it reads LRNFLKKRLY…EIYLNIQEVR (69 aa).

The protein belongs to the universal ribosomal protein uS3 family. As to quaternary structure, part of the 30S ribosomal subunit. Forms a tight complex with proteins S10 and S14.

Functionally, binds the lower part of the 30S subunit head. Binds mRNA in the 70S ribosome, positioning it for translation. The sequence is that of Small ribosomal subunit protein uS3 from Geobacter sulfurreducens (strain ATCC 51573 / DSM 12127 / PCA).